Here is a 417-residue protein sequence, read N- to C-terminus: Serine hydroxymethyltransferase 3 (417 aa).

Residues leucine 121 and 125 to 127 contribute to the (6S)-5,6,7,8-tetrahydrofolate site; that span reads GHL. The residue at position 230 (lysine 230) is an N6-(pyridoxal phosphate)lysine. 355–357 is a binding site for (6S)-5,6,7,8-tetrahydrofolate; that stretch reads SPF.

It belongs to the SHMT family. In terms of assembly, homodimer. Pyridoxal 5'-phosphate is required as a cofactor.

It localises to the cytoplasm. The enzyme catalyses (6R)-5,10-methylene-5,6,7,8-tetrahydrofolate + glycine + H2O = (6S)-5,6,7,8-tetrahydrofolate + L-serine. It functions in the pathway one-carbon metabolism; tetrahydrofolate interconversion. It participates in amino-acid biosynthesis; glycine biosynthesis; glycine from L-serine: step 1/1. Functionally, catalyzes the reversible interconversion of serine and glycine with tetrahydrofolate (THF) serving as the one-carbon carrier. This reaction serves as the major source of one-carbon groups required for the biosynthesis of purines, thymidylate, methionine, and other important biomolecules. Also exhibits THF-independent aldolase activity toward beta-hydroxyamino acids, producing glycine and aldehydes, via a retro-aldol mechanism. The chain is Serine hydroxymethyltransferase 3 from Pseudomonas fluorescens (strain Pf0-1).